A 558-amino-acid chain; its full sequence is Oxygen-dependent choline dehydrogenase (558 aa).

4–33 lines the FAD pocket; sequence DYIIIGAGSAGNVLATRLTEDSDTTVLLLE. His473 functions as the Proton acceptor in the catalytic mechanism.

The protein belongs to the GMC oxidoreductase family. Requires FAD as cofactor.

It catalyses the reaction choline + A = betaine aldehyde + AH2. The enzyme catalyses betaine aldehyde + NAD(+) + H2O = glycine betaine + NADH + 2 H(+). It functions in the pathway amine and polyamine biosynthesis; betaine biosynthesis via choline pathway; betaine aldehyde from choline (cytochrome c reductase route): step 1/1. In terms of biological role, involved in the biosynthesis of the osmoprotectant glycine betaine. Catalyzes the oxidation of choline to betaine aldehyde and betaine aldehyde to glycine betaine at the same rate. This chain is Oxygen-dependent choline dehydrogenase, found in Citrobacter koseri (strain ATCC BAA-895 / CDC 4225-83 / SGSC4696).